The chain runs to 136 residues: Large ribosomal subunit protein bL17 (136 aa).

Belongs to the bacterial ribosomal protein bL17 family. As to quaternary structure, part of the 50S ribosomal subunit. Contacts protein L32.

In Rickettsia peacockii (strain Rustic), this protein is Large ribosomal subunit protein bL17.